The primary structure comprises 99 residues: Integration host factor subunit alpha (99 aa).

The interval 49–71 is disordered; it reads FGNFDLRDKNQRPGRNPKTGEDI.

It belongs to the bacterial histone-like protein family. Heterodimer of an alpha and a beta chain.

Its function is as follows. This protein is one of the two subunits of integration host factor, a specific DNA-binding protein that functions in genetic recombination as well as in transcriptional and translational control. The sequence is that of Integration host factor subunit alpha from Shewanella denitrificans (strain OS217 / ATCC BAA-1090 / DSM 15013).